Here is a 464-residue protein sequence, read N- to C-terminus: Protein ABHD18 (464 aa).

The N-terminal stretch at 1-24 is a signal peptide; sequence MGVSKLDILYRRLLLTKLFIRGWG. Asn-341 is a glycosylation site (N-linked (GlcNAc...) asparagine).

Belongs to the AB hydrolase superfamily.

The protein localises to the secreted. This chain is Protein ABHD18, found in Rattus norvegicus (Rat).